The following is a 344-amino-acid chain: 2-aminoethylphosphonate--pyruvate transaminase (344 aa).

At lysine 194 the chain carries N6-(pyridoxal phosphate)lysine.

Belongs to the class-V pyridoxal-phosphate-dependent aminotransferase family. PhnW subfamily. As to quaternary structure, homodimer. It depends on pyridoxal 5'-phosphate as a cofactor.

The catalysed reaction is (2-aminoethyl)phosphonate + pyruvate = phosphonoacetaldehyde + L-alanine. Functionally, involved in phosphonate degradation. This is 2-aminoethylphosphonate--pyruvate transaminase from Bacillus cereus.